Consider the following 260-residue polypeptide: KNKRLTKGGKKGAKKKVVDPFSKKDWYDVKAPAMFNIRNIGKTLVTRTQGTKIASDGLKGRVFEVSLADLQNDEVAFRKFKLITEDVQGKNCLTNFHGMDLTRDKMCSMVKKWQTMIEAHVDVKTTDGYLLRLFCVGFTKKRNNQIRKTSYAQHQQVRQIRKKMMEIMTREVQTNDLKEVVNKLIPDSIGKDIEKACQSIYPLHDVFVRKVKMLKKPKFELGKLMELHGEGSSSGKATGDETGAKVERADGYEPPVQESV.

Lysine 30 is subject to N6-acetyllysine; alternate. Residue lysine 30 forms a Glycyl lysine isopeptide (Lys-Gly) (interchain with G-Cter in SUMO2); alternate linkage. An N6-acetyllysine modification is found at lysine 52. Position 151 is an ADP-ribosyltyrosine (tyrosine 151). The interval 228-260 (HGEGSSSGKATGDETGAKVERADGYEPPVQESV) is disordered. Serine 232 and serine 233 each carry phosphoserine. Over residues 238–251 (TGDETGAKVERADG) the composition is skewed to basic and acidic residues. The residue at position 245 (lysine 245) is an N6-acetyllysine; alternate. Lysine 245 is covalently cross-linked (Glycyl lysine isopeptide (Lys-Gly) (interchain with G-Cter in SUMO2); alternate). Position 252 is a phosphotyrosine (tyrosine 252). A Phosphoserine modification is found at serine 259.

Belongs to the eukaryotic ribosomal protein eS1 family. As to quaternary structure, component of the small ribosomal subunit. Mature ribosomes consist of a small (40S) and a large (60S) subunit. The 40S subunit contains about 33 different proteins and 1 molecule of RNA (18S). The 60S subunit contains about 49 different proteins and 3 molecules of RNA (28S, 5.8S and 5S). Identified in a IGF2BP1-dependent mRNP granule complex containing untranslated mRNAs. Binds with high affinity to IPO4. Interacts with DDIT3. Part of the small subunit (SSU) processome, composed of more than 70 proteins and the RNA chaperone small nucleolar RNA (snoRNA) U3. In terms of processing, ADP-ribosylated at Tyr-151 by PARP1 in presence of HPF1.

It localises to the cytoplasm. Its subcellular location is the nucleus. The protein resides in the nucleolus. Functionally, component of the small ribosomal subunit. The ribosome is a large ribonucleoprotein complex responsible for the synthesis of proteins in the cell. Part of the small subunit (SSU) processome, first precursor of the small eukaryotic ribosomal subunit. During the assembly of the SSU processome in the nucleolus, many ribosome biogenesis factors, an RNA chaperone and ribosomal proteins associate with the nascent pre-rRNA and work in concert to generate RNA folding, modifications, rearrangements and cleavage as well as targeted degradation of pre-ribosomal RNA by the RNA exosome. May play a role during erythropoiesis through regulation of transcription factor DDIT3. The protein is Small ribosomal subunit protein eS1 of Felis catus (Cat).